Here is a 116-residue protein sequence, read N- to C-terminus: Large ribosomal subunit protein eL22A (116 aa).

This sequence belongs to the eukaryotic ribosomal protein eL22 family.

The chain is Large ribosomal subunit protein eL22A (rpl22) from Dictyostelium discoideum (Social amoeba).